Here is a 942-residue protein sequence, read N- to C-terminus: MKITFLLTWGDEMGGTEQAVYTQATHLAPRHDIEVLSVFKTREQPFFSVDERVSVRYLVDRTGKTERPVRESDLTAEDCRHLAGLPSDLISPKWEATFDALSDVEMQRALRTIDTDVLITTSPALMSAVADLAPSRVITIQQEHRPSQLRGGTGEPLLLRAPAIDALVVLTERTKQWLEESLGKAAPRLAAIPNAIPEGFRPRSSLTGKTIVMPRRLVPDKQVDHAIQAFAKALPDHPGWRLRIFGDGPQMSRLRNLIQGLGLHDSVELLGPSQHMTEEWARASLTILPSQDGEAFPLVLLEAFAAGVPAVAYDIVTGPAEIIRHGEDGLLVPPNDVESLAEAISRLMGDEALLRSYGEKAHEGSTRFAADVIVKQWEELFTELVSRRDDPRRMAERADRIAHRVAHGGAGRFHAAVAADRTAPSSGDQRAREVVIGASDRSLVRAGGRLSEVRDDLQGSEIVQRNFETVVEALESSGIPYVLLRDRDDNPRRRLAVDAAEQTRVRKALAGAYEGKAVYAELLKPRTHAPGVLLAERLEAVGEVAGLRVFRPVVTSTRTLRFGPAYGCDIEFWRQVPEEEGGDGQFVAPLRPSAVGPKLPSLTPDARTRVKDREYPTLEPLTRKLVSDITFPVDAVYTWVDDSDPRWQERRARRRAALGLEAESSGDEAARFRNRDELRYSLRSLAMFAPWIRKIYLVTDDQTPEWLNTEHEGIEVVSHRDIFTDQDCLPTFNSHSIESQLHHIDGLSEQFLYLNDDVFIGRPVGAQRFFLPNGASRFFWSPTTVPVGEPTEEDEGYFAAAKNNRALLEERFGVTVANSFVHAPHPLRRSVLESIEEDFPESVARTAATPMRGWQDISMVSSLHHHYGYLTGASVPSSIRCAYIDVGTYSRHPELTRLLAMRGHDVFCLGESQDAEVPEHEQARIVEAFLRAYFPVKSPYER.

It belongs to the stealth family.

The chain is Exopolysaccharide phosphotransferase SCO2592 from Streptomyces coelicolor (strain ATCC BAA-471 / A3(2) / M145).